Consider the following 436-residue polypeptide: Amino acid transporter AVT3C (436 aa).

Over residues 1–13 the composition is skewed to polar residues; sequence MGFQNEASSSSYT. The interval 1-21 is disordered; sequence MGFQNEASSSSYTLKIPPPAR. Over 1 to 38 the chain is Cytoplasmic; that stretch reads MGFQNEASSSSYTLKIPPPAREDSPLLGKGPPLSSQFK. The helical transmembrane segment at 39–59 threads the bilayer; the sequence is TFANVFIAVVGAGVLGLPYAF. Topologically, residues 60 to 65 are vacuolar; sequence KRTGWL. A helical transmembrane segment spans residues 66 to 86; it reads MGVLLLVSVSVLTHHCMMLLV. Residues 87–118 lie on the Cytoplasmic side of the membrane; that stretch reads YTRRKLDSFNAGISKIGSFGDLGFAVCGSLGR. Residues 119–139 form a helical membrane-spanning segment; the sequence is IVVDLFIILSQAGFCVGYLIF. Residues 140–166 are Vacuolar-facing; it reads IGTTLANLSDPESPTSLRHQFTRLGSE. Residues 167–187 form a helical membrane-spanning segment; that stretch reads FLGVSSKSLYIWGCFPFQLGL. Residues 188–195 lie on the Cytoplasmic side of the membrane; sequence NSIKTLTH. The chain crosses the membrane as a helical span at residues 196-216; it reads LAPLSIFADIVDLGAMAVVIV. The Vacuolar portion of the chain corresponds to 217–228; the sequence is EDSMIILKQRPD. Residues 229–249 form a helical membrane-spanning segment; it reads VVAFGGMSLFLYGMGVAVYSF. Residues 250-273 lie on the Cytoplasmic side of the membrane; the sequence is EGVGMVLPLESEMKDKDKFGKVLA. The helical transmembrane segment at 274–294 threads the bilayer; it reads LGMGFISLIYIAFGILGYLAF. Residues 295 to 309 are Vacuolar-facing; it reads GEDTMDIITANLGAG. The helical transmembrane segment at 310 to 330 threads the bilayer; it reads LVSTVVQLGLCINLFFTFPLM. Topologically, residues 331–352 are cytoplasmic; sequence MNPVFEIVERRFSRGMYSAWLR. Residues 353 to 373 traverse the membrane as a helical segment; the sequence is WVLVLAVTLVALFVPNFADFL. The Vacuolar segment spans residues 374 to 376; sequence SLV. The chain crosses the membrane as a helical span at residues 377–397; sequence GSSTCCVLGFVLPALFHLLVF. Residues 398-411 are Cytoplasmic-facing; the sequence is KEEMGWLQWSSDTA. Residues 412–432 form a helical membrane-spanning segment; sequence IVVLGVVLAVSGTWSSLSEIF. Residues 433 to 436 are Vacuolar-facing; it reads SVKV.

This sequence belongs to the amino acid/polyamine transporter 2 family. Amino acid/auxin permease (AAAP) (TC 2.A.18.8) subfamily. In terms of tissue distribution, ubiquitous.

It is found in the vacuole membrane. Translocates preferentially neutral amino acids from the vacuole to the cytoplasm. The chain is Amino acid transporter AVT3C from Arabidopsis thaliana (Mouse-ear cress).